The sequence spans 256 residues: DNA repair protein RecO (256 aa).

It belongs to the RecO family.

Its function is as follows. Involved in DNA repair and RecF pathway recombination. In Desulforamulus reducens (strain ATCC BAA-1160 / DSM 100696 / MI-1) (Desulfotomaculum reducens), this protein is DNA repair protein RecO.